The following is a 103-amino-acid chain: Antitoxin VapB1 (103 aa).

In terms of biological role, antitoxin component of a type II toxin-antitoxin (TA) system. Upon expression in E.coli neutralizes the effect of cognate toxin VapC1, partially inhibits the RNase activity of VapC1 in vitro. The polypeptide is Antitoxin VapB1 (vapB1) (Rickettsia felis (strain ATCC VR-1525 / URRWXCal2) (Rickettsia azadi)).